Reading from the N-terminus, the 802-residue chain is Potassium channel AKT2/3 (802 aa).

Residues 1 to 79 (MDLKYSASHC…PMDSRYRCWE (79 aa)) are Cytoplasmic-facing. The chain crosses the membrane as a helical span at residues 80–100 (FYMVLLVAYSAWVYPFEVAFL). The Extracellular segment spans residues 101–109 (NSSPKRNLC). A helical membrane pass occupies residues 110–130 (IADNIVDLFFAVDIVLTFFVA). At 131-153 (YIDERTQLLVREPKQIAVRYLST) the chain is on the cytoplasmic side. The chain crosses the membrane as a helical span at residues 154 to 174 (WFLMDVASTIPFDAIGYLITG). The Extracellular portion of the chain corresponds to 175 to 183 (TSTLNITCN). An N-linked (GlcNAc...) asparagine glycan is attached at N179. The chain crosses the membrane as a helical; Voltage-sensor span at residues 184-204 (LLGLLRFWRLRRVKHLFTRLE). The Cytoplasmic segment spans residues 205–218 (KDIRYSYFWIRCFR). Residues 219-239 (LLSVTLFLVHCAGCSYYLIAD) form a helical membrane-spanning segment. The Extracellular segment spans residues 240–265 (RYPHQGKTWTDAIPNFTETSLSIRYI). A glycan (N-linked (GlcNAc...) asparagine) is linked at N254. Positions 266-285 (AAIYWSITTMTTVGYGDLHA) form an intramembrane region, pore-forming. Topologically, residues 286–288 (SNT) are extracellular. Residues 289 to 309 (IEMVFITVYMLFNLGLTAYLI) traverse the membrane as a helical segment. Over 310–802 (GNMTNLVVEG…KLYFVVNKII (493 aa)) the chain is Cytoplasmic. 394-513 (LFKGVSREIL…ATMLKNFLQH (120 aa)) is a binding site for a nucleoside 3',5'-cyclic phosphate. 5 ANK repeats span residues 540-569 (NIASNLIAVVTTGNAALLDELLKAKLSPDI), 573-602 (KGKTPLHVAASRGYEDCVLVLLKHGCNIHI), 606-636 (NGNSALWEAIISKHYEIFRILYHFAAISDPH), 637-666 (IAGDLLCEAAKQNNVEVMKALLKQGLNVDT), and 670-699 (HGVTALQVAMAEDQMDMVNLLATNGADVVC). Residues 725–802 (RVSIYRGHPL…KLYFVVNKII (78 aa)) enclose the KHA domain.

The protein belongs to the potassium channel family. Plant (TC 1.A.1.4) subfamily. In terms of assembly, the potassium channel is probably composed of a homo- or heterotetrameric complex of pore-forming subunits. Interacts with the phosphatase PPC2A and the kinase CIPK6. May interact with AKT1, KAT1 and KAT3. Interacts with SLAC1. Post-translationally, dephosphorylated by PP2CA. As to expression, expressed mainly in the phloem tissues throughout the plant but also, at a lower level, in leaf epiderm, mesophyll and guard cells.

The protein resides in the endoplasmic reticulum membrane. Functionally, highly selective and weak inward-rectifying potassium channel. Plays a role in both loading and unloading potassium into/from the phloem sap. Seems to control sugar loading into phloem via a voltage-dependent process. Blocked by physiological concentrations of external calcium and by external acidification. May interact with the cytoskeleton or with regulatory proteins. Dephosphorylation by PP2CA not only leads to the inhibition of potassium currents but also to an increase of the voltage-dependence of the channel. Regulated by the CBL4/CIPK6 calcium sensor/protein kinase complex via a kinase interaction-dependent but phosphorylation-independent translocation of the channel to the plasma membrane. The polypeptide is Potassium channel AKT2/3 (AKT2) (Arabidopsis thaliana (Mouse-ear cress)).